The sequence spans 444 residues: MLNIFKPAPHIERLDDSKMDAAYKRLRLQVFIGIFIGYAGYYLLRKNFAFAIPYLQEQGFSKTELGLVLAAVSIAYGFSKFIMGMVSDRCNPRYFLATGLFLSAIVNILFVSMPWVTSSVTIMFIFMFINGWFQGMGWPPCGRTMAHWFSISERGTKMSIWNVAHNIGGGILAPLVTLGIAMFVTWKSVFFFPAIIAIIISFLIVLLVRDTPQSCGLPPIEEYRNDYPKHAFKNQEKELTTKEILFQYVLNNKFLWYIAFANVFVYFVRYGVVDWAPTYLTEAKGFSPEDSRWSYFLYEYAGIPGTILCGWISDRFFKSRRAPAGVLFMAGVFIAVLVYWLNPAGNPLVDNIALISIGFLIYGPVMLIGLQAIDLAPKKAAGTAAGLTGFFGYIGGSAFANAIMGFVVDRFNWNGGFIMLISSCILAIVFLALTWNTGKRAEHV.

The Cytoplasmic portion of the chain corresponds to 1 to 36 (MLNIFKPAPHIERLDDSKMDAAYKRLRLQVFIGIFI). Residues 37–57 (GYAGYYLLRKNFAFAIPYLQE) traverse the membrane as a helical segment. Topologically, residues 58-63 (QGFSKT) are extracellular. Residues 64-84 (ELGLVLAAVSIAYGFSKFIMG) traverse the membrane as a helical segment. Residues 85–93 (MVSDRCNPR) lie on the Cytoplasmic side of the membrane. A helical membrane pass occupies residues 94–112 (YFLATGLFLSAIVNILFVS). Residues 113–120 (MPWVTSSV) lie on the Extracellular side of the membrane. The chain crosses the membrane as a helical span at residues 121 to 141 (TIMFIFMFINGWFQGMGWPPC). At 142-160 (GRTMAHWFSISERGTKMSI) the chain is on the cytoplasmic side. The chain crosses the membrane as a helical span at residues 161–180 (WNVAHNIGGGILAPLVTLGI). Residues 181 to 189 (AMFVTWKSV) are Extracellular-facing. Residues 190-207 (FFFPAIIAIIISFLIVLL) traverse the membrane as a helical segment. At 208–261 (VRDTPQSCGLPPIEEYRNDYPKHAFKNQEKELTTKEILFQYVLNNKFLWYIAFA) the chain is on the cytoplasmic side. A helical membrane pass occupies residues 262 to 282 (NVFVYFVRYGVVDWAPTYLTE). Residues 283–287 (AKGFS) lie on the Extracellular side of the membrane. The chain crosses the membrane as a helical span at residues 288–308 (PEDSRWSYFLYEYAGIPGTIL). Residues 309-321 (CGWISDRFFKSRR) lie on the Cytoplasmic side of the membrane. A helical transmembrane segment spans residues 322-341 (APAGVLFMAGVFIAVLVYWL). Residues 342 to 346 (NPAGN) lie on the Extracellular side of the membrane. Residues 347–368 (PLVDNIALISIGFLIYGPVMLI) traverse the membrane as a helical segment. The Cytoplasmic segment spans residues 369–387 (GLQAIDLAPKKAAGTAAGL). The helical transmembrane segment at 388-409 (TGFFGYIGGSAFANAIMGFVVD) threads the bilayer. At 410-414 (RFNWN) the chain is on the extracellular side. A helical membrane pass occupies residues 415 to 435 (GGFIMLISSCILAIVFLALTW). The Cytoplasmic portion of the chain corresponds to 436 to 444 (NTGKRAEHV).

It belongs to the major facilitator superfamily. Organophosphate:Pi antiporter (OPA) (TC 2.A.1.4) family.

Its subcellular location is the cell membrane. In terms of biological role, responsible for glycerol-3-phosphate uptake. The polypeptide is Glycerol-3-phosphate transporter (glpT) (Bacillus subtilis (strain 168)).